The chain runs to 432 residues: Trigger factor (432 aa).

Residues 161-246 (EDRVTIDFTG…LKKVEERELP (86 aa)) form the PPIase FKBP-type domain.

Belongs to the FKBP-type PPIase family. Tig subfamily.

The protein resides in the cytoplasm. The enzyme catalyses [protein]-peptidylproline (omega=180) = [protein]-peptidylproline (omega=0). Involved in protein export. Acts as a chaperone by maintaining the newly synthesized protein in an open conformation. Functions as a peptidyl-prolyl cis-trans isomerase. The sequence is that of Trigger factor from Salmonella typhi.